Reading from the N-terminus, the 99-residue chain is Small ribosomal subunit protein bS21 (99 aa).

Positions 60–99 (KKLQREGLLPMKPKPVFGAGPGGDRRGPGAGPGAGPRPAR) are disordered.

It belongs to the bacterial ribosomal protein bS21 family.

This chain is Small ribosomal subunit protein bS21, found in Rhodopseudomonas palustris (strain BisA53).